The chain runs to 299 residues: ATP phosphoribosyltransferase (299 aa).

It belongs to the ATP phosphoribosyltransferase family. Long subfamily. In terms of assembly, equilibrium between an active dimeric form, an inactive hexameric form and higher aggregates. Interconversion between the various forms is largely reversible and is influenced by the natural substrates and inhibitors of the enzyme. It depends on Mg(2+) as a cofactor.

Its subcellular location is the cytoplasm. It carries out the reaction 1-(5-phospho-beta-D-ribosyl)-ATP + diphosphate = 5-phospho-alpha-D-ribose 1-diphosphate + ATP. It functions in the pathway amino-acid biosynthesis; L-histidine biosynthesis; L-histidine from 5-phospho-alpha-D-ribose 1-diphosphate: step 1/9. Feedback inhibited by histidine. Catalyzes the condensation of ATP and 5-phosphoribose 1-diphosphate to form N'-(5'-phosphoribosyl)-ATP (PR-ATP). Has a crucial role in the pathway because the rate of histidine biosynthesis seems to be controlled primarily by regulation of HisG enzymatic activity. This chain is ATP phosphoribosyltransferase, found in Buchnera aphidicola subsp. Melaphis rhois.